The primary structure comprises 461 residues: D-phenylhydantoinase (461 aa).

A divalent metal cation-binding residues include His-59, His-61, and Lys-151. Lys-151 carries the post-translational modification N6-carboxylysine. Tyr-156 provides a ligand contact to substrate. A divalent metal cation is bound by residues His-182 and His-239. Ser-286 lines the substrate pocket. Asp-313 contributes to the a divalent metal cation binding site. Asn-335 lines the substrate pocket.

It belongs to the metallo-dependent hydrolases superfamily. Hydantoinase/dihydropyrimidinase family. As to quaternary structure, homotetramer. A divalent metal cation is required as a cofactor. In terms of processing, carboxylation allows a single lysine to coordinate two divalent metal cations.

It catalyses the reaction D-5-phenylhydantoin + H2O = N-carbamoyl-D-phenylglycine + H(+). Its function is as follows. Catalyzes the stereospecific hydrolysis of the cyclic amide bond of D-hydantoin derivatives with an aromatic side chains at the 5'-position. Has no activity on dihydropyrimidines. The physiological function is unknown. This chain is D-phenylhydantoinase, found in Escherichia coli O7:K1 (strain IAI39 / ExPEC).